Here is a 110-residue protein sequence, read N- to C-terminus: Carboxysome shell protein CsoS1B (110 aa).

The region spanning 8 to 93 is the BMC domain; the sequence is ALGMIETRGL…VHSEVEIILP (86 aa).

It belongs to the bacterial microcompartments protein family. CsoS1 subfamily. As to quaternary structure, homohexamer with a small central pore. Interacts with the N-terminus (residues 1-136) of RuBisCO (CbbL).

Its subcellular location is the carboxysome. In terms of biological role, one of shell proteins of the carboxysome, a polyhedral inclusion where RuBisCO (ribulose bisphosphate carboxylase, ccbL-ccbS) is sequestered. Assembles into hexamers which make sheets that form the facets of the polyhedral carboxysome. The shell probably limits the diffusion of CO(2) into and out of the carboxysome. There are estimated to be 540 CsoS1B proteins per carboxysome. Unlike beta-carboxysomes, alpha-carboxysomes (Cb) can form without cargo protein. CsoS2 is essential for Cb formation and is also capable of targeting foreign proteins to the Cb. The Cb shell assembles with the aid of CsoS2; CsoS1A, CsoS1B and CsoS1C form the majority of the shell while CsoS4A and CsoS4B form vertices. CsoS1D forms pseudohexamers that probably control metabolite flux into and out of the shell. The chain is Carboxysome shell protein CsoS1B from Halothiobacillus neapolitanus (strain ATCC 23641 / c2) (Thiobacillus neapolitanus).